The sequence spans 253 residues: Vitamin B12 import ATP-binding protein BtuD (253 aa).

Residues 3-237 enclose the ABC transporter domain; that stretch reads LDAKNLAMPP…EQLESTFATQ (235 aa). 31-38 serves as a coordination point for ATP; it reads GPNGSGKS.

The protein belongs to the ABC transporter superfamily. Vitamin B12 importer (TC 3.A.1.13.1) family. In terms of assembly, the complex is composed of two ATP-binding proteins (BtuD), two transmembrane proteins (BtuC) and a solute-binding protein (BtuF).

It localises to the cell inner membrane. The catalysed reaction is an R-cob(III)alamin(out) + ATP + H2O = an R-cob(III)alamin(in) + ADP + phosphate + H(+). In terms of biological role, part of the ABC transporter complex BtuCDF involved in vitamin B12 import. Responsible for energy coupling to the transport system. In Photobacterium profundum (strain SS9), this protein is Vitamin B12 import ATP-binding protein BtuD.